A 430-amino-acid chain; its full sequence is Adenylosuccinate synthetase (430 aa).

GTP-binding positions include glycine 12–lysine 18 and glycine 40–threonine 42. Residue aspartate 13 is the Proton acceptor of the active site. Mg(2+) is bound by residues aspartate 13 and glycine 40. IMP contacts are provided by residues aspartate 13 to lysine 16, asparagine 38 to histidine 41, threonine 130, arginine 144, glutamine 224, threonine 239, and arginine 303. The Proton donor role is filled by histidine 41. Residue threonine 299–arginine 305 participates in substrate binding. GTP contacts are provided by residues arginine 305, lysine 331–aspartate 333, and serine 413–serine 415.

It belongs to the adenylosuccinate synthetase family. In terms of assembly, homodimer. Mg(2+) serves as cofactor.

The protein resides in the cytoplasm. The enzyme catalyses IMP + L-aspartate + GTP = N(6)-(1,2-dicarboxyethyl)-AMP + GDP + phosphate + 2 H(+). It participates in purine metabolism; AMP biosynthesis via de novo pathway; AMP from IMP: step 1/2. Functionally, plays an important role in the de novo pathway of purine nucleotide biosynthesis. Catalyzes the first committed step in the biosynthesis of AMP from IMP. The sequence is that of Adenylosuccinate synthetase from Hyphomonas neptunium (strain ATCC 15444).